The following is a 147-amino-acid chain: Endoribonuclease YbeY (147 aa).

The Zn(2+) site is built by histidine 109, histidine 113, and histidine 119.

Belongs to the endoribonuclease YbeY family. It depends on Zn(2+) as a cofactor.

Its subcellular location is the cytoplasm. In terms of biological role, single strand-specific metallo-endoribonuclease involved in late-stage 70S ribosome quality control and in maturation of the 3' terminus of the 16S rRNA. The protein is Endoribonuclease YbeY of Thiobacillus denitrificans (strain ATCC 25259 / T1).